Reading from the N-terminus, the 464-residue chain is Arylsulfatase (464 aa).

Residues 1-20 (MNKKAMAAAVSMILAGGAHA) form the signal peptide. Ca(2+) contacts are provided by aspartate 34, aspartate 35, and serine 72. The active-site Nucleophile is the serine 72. Position 72 is a 3-oxoalanine (Ser) (serine 72). Histidine 134 is a catalytic residue. The Ca(2+) site is built by aspartate 329 and asparagine 330.

This sequence belongs to the sulfatase family. Ca(2+) serves as cofactor. The conversion to 3-oxoalanine (also known as C-formylglycine, FGly), of a serine or cysteine residue in prokaryotes and of a cysteine residue in eukaryotes, is critical for catalytic activity.

The protein resides in the periplasm. The enzyme catalyses an aryl sulfate + H2O = a phenol + sulfate + H(+). Functionally, plays an important role in the mineralization of sulfates. The polypeptide is Arylsulfatase (atsA) (Klebsiella aerogenes (Enterobacter aerogenes)).